We begin with the raw amino-acid sequence, 273 residues long: Ribosomal RNA small subunit methyltransferase A (273 aa).

Residues H10, L12, G37, E58, D83, and N108 each contribute to the S-adenosyl-L-methionine site.

Belongs to the class I-like SAM-binding methyltransferase superfamily. rRNA adenine N(6)-methyltransferase family. RsmA subfamily.

It localises to the cytoplasm. The catalysed reaction is adenosine(1518)/adenosine(1519) in 16S rRNA + 4 S-adenosyl-L-methionine = N(6)-dimethyladenosine(1518)/N(6)-dimethyladenosine(1519) in 16S rRNA + 4 S-adenosyl-L-homocysteine + 4 H(+). Functionally, specifically dimethylates two adjacent adenosines (A1518 and A1519) in the loop of a conserved hairpin near the 3'-end of 16S rRNA in the 30S particle. May play a critical role in biogenesis of 30S subunits. In Picosynechococcus sp. (strain ATCC 27264 / PCC 7002 / PR-6) (Agmenellum quadruplicatum), this protein is Ribosomal RNA small subunit methyltransferase A.